A 188-amino-acid polypeptide reads, in one-letter code: GTP cyclohydrolase 1 (188 aa).

The Zn(2+) site is built by cysteine 75, histidine 78, and cysteine 146.

Belongs to the GTP cyclohydrolase I family. As to quaternary structure, toroid-shaped homodecamer, composed of two pentamers of five dimers.

The catalysed reaction is GTP + H2O = 7,8-dihydroneopterin 3'-triphosphate + formate + H(+). Its pathway is cofactor biosynthesis; 7,8-dihydroneopterin triphosphate biosynthesis; 7,8-dihydroneopterin triphosphate from GTP: step 1/1. This Hahella chejuensis (strain KCTC 2396) protein is GTP cyclohydrolase 1.